Here is a 324-residue protein sequence, read N- to C-terminus: Methyltransferase pytC (324 aa).

A disordered region spans residues M1 to C28.

Belongs to the methyltransferase superfamily. LaeA methyltransferase family.

The protein operates within secondary metabolite biosynthesis. Functionally, methyltransferase; part of the gene cluster that mediates the biosynthesis of pyranterreones, a family of antioxidative compounds. The first step of pyranonigrins biosynthesis is performed by the hybrid PKS-NRPS synthetase pytA that condenses 4 malonyl-CoA units ato the acetyl starter unit by the modular PKS of pytA. The acyl chain is then connected to an L-serine through the amide bond by the modular NRPS of pytA. A tetramic acid is formed and released from the PKS-NRPS pytA to give pyranterreone 5 with the help of the thioesterase pytI. Pyranterreone 5 could be methylated by pytC to afford pyranterreone 6. Both pyranterreones 5 and 6 are subsequently oxidized by the FAD-linked oxidoreductase pytB and the cytochrome P450 monooxygenase pytD to form the fused gamma-pyrone core, resulting in pyranterreones 7 and 11, respectively. The hydroxy group at C-8 of pyranterreones 7 and 11 are dehydrated by the aspartyl protease pytH to form a delta-7 double bond to give pyranterreones 3 and 1, 2 accordingly. The exo-methylene of pyranterreone 3 could be reduced into a pendant methyl by reductase pytE to provide pyranterreone 4, also known as cordylactam. Pyranterreone 4 can be reconverted to pyranterreone 3 through pytB-catalyzed dehydrogenation or further oxidized to pyranterreones 9 and 10. The protein is Methyltransferase pytC of Aspergillus terreus.